The chain runs to 291 residues: Beta-lactamase CTX-M-1 (291 aa).

The N-terminal stretch at 1 to 28 is a signal peptide; that stretch reads MVKKSLRQFTLMATATVTLLLGSVPLYA. Residue serine 73 is the Nucleophile; acyl-ester intermediate of the active site. A beta-lactam-binding residues include lysine 76, serine 133, glutamate 169, and serine 240. Glutamate 169 acts as the Proton acceptor in catalysis.

This sequence belongs to the class-A beta-lactamase family. In terms of assembly, monomer.

It localises to the secreted. The catalysed reaction is a beta-lactam + H2O = a substituted beta-amino acid. Inhibited by the beta-lactamase-blocking agent clavulanic acid; in the TG1 strain. Its function is as follows. Extended-spectrum beta-lactamase (ESBL) which confers resistance to penicillins, as well as first, second and third-generation cephalosporins. Has cefotaxime-hydrolyzing activity. Inactive against the cephamycin antibiotic, cefoxitin, or against the carbapenem, imipenem. This chain is Beta-lactamase CTX-M-1, found in Escherichia coli.